The primary structure comprises 207 residues: Imidazoleglycerol-phosphate dehydratase (207 aa).

This sequence belongs to the imidazoleglycerol-phosphate dehydratase family.

The protein localises to the cytoplasm. It catalyses the reaction D-erythro-1-(imidazol-4-yl)glycerol 3-phosphate = 3-(imidazol-4-yl)-2-oxopropyl phosphate + H2O. It functions in the pathway amino-acid biosynthesis; L-histidine biosynthesis; L-histidine from 5-phospho-alpha-D-ribose 1-diphosphate: step 6/9. The polypeptide is Imidazoleglycerol-phosphate dehydratase (hisB) (Azospirillum brasilense).